The chain runs to 246 residues: UDP-N-acetyl-D-mannosaminuronic acid transferase (246 aa).

It belongs to the glycosyltransferase 26 family.

The catalysed reaction is UDP-N-acetyl-alpha-D-mannosaminouronate + N-acetyl-alpha-D-glucosaminyl-di-trans,octa-cis-undecaprenyl diphosphate = beta-D-ManNAcA-(1-&gt;4)-alpha-D-GlcNAc-di-trans,octa-cis-undecaprenyl diphosphate + UDP + H(+). It participates in bacterial outer membrane biogenesis; enterobacterial common antigen biosynthesis. Functionally, catalyzes the synthesis of Und-PP-GlcNAc-ManNAcA (Lipid II), the second lipid-linked intermediate involved in enterobacterial common antigen (ECA) synthesis. The chain is UDP-N-acetyl-D-mannosaminuronic acid transferase from Klebsiella pneumoniae (strain 342).